The sequence spans 28 residues: Chaperonin GroEL (28 aa).

This sequence belongs to the chaperonin (HSP60) family. Forms a cylinder of 14 subunits composed of two heptameric rings stacked back-to-back. Interacts with the co-chaperonin GroES.

It is found in the cytoplasm. It carries out the reaction ATP + H2O + a folded polypeptide = ADP + phosphate + an unfolded polypeptide.. Functionally, together with its co-chaperonin GroES, plays an essential role in assisting protein folding. The GroEL-GroES system forms a nano-cage that allows encapsulation of the non-native substrate proteins and provides a physical environment optimized to promote and accelerate protein folding. The polypeptide is Chaperonin GroEL (Mycolicibacterium smegmatis (Mycobacterium smegmatis)).